The primary structure comprises 860 residues: Probable linoleate 9S-lipoxygenase 4 (860 aa).

The 131-residue stretch at Asn-29 to Ala-159 folds into the PLAT domain. The Lipoxygenase domain occupies Pro-162–Ile-860. The disordered stretch occupies residues Pro-209–Glu-246. Fe cation-binding residues include His-521, His-526, His-712, Asn-716, and Ile-860.

Belongs to the lipoxygenase family. In terms of assembly, monomer. Requires Fe cation as cofactor. As to expression, expressed in tubers and roots. Not detected in leaves, flowers, stems, shoot tips, or axillary buds.

It is found in the cytoplasm. It catalyses the reaction (9Z,12Z)-octadecadienoate + O2 = (9S)-hydroperoxy-(10E,12Z)-octadecadienoate. It participates in lipid metabolism; oxylipin biosynthesis. In terms of biological role, plant lipoxygenases may be involved in a number of diverse aspects of plant physiology including growth and development, pest resistance, and senescence or responses to wounding. Catalyzes the hydroperoxidation of lipids containing a cis,cis-1,4-pentadiene structure. The polypeptide is Probable linoleate 9S-lipoxygenase 4 (LOX1.4) (Solanum tuberosum (Potato)).